The sequence spans 153 residues: MKLRRQLCIIDIINQKEVATQEELCETLKNQGFDVTQATVSRDIKELKLIKVADKDGYHYALPDTPGVKGSFERMKRVIEDSVLGLDYSENLIIIKTLPGSAHAVASLIDSAEWPTIIGTVAGDDTILAVVKPKEAAPGIVEEFEQLMLKSNR.

It belongs to the ArgR family.

Its subcellular location is the cytoplasm. Its pathway is amino-acid biosynthesis; L-arginine biosynthesis [regulation]. Functionally, regulates arginine biosynthesis genes. In Syntrophomonas wolfei subsp. wolfei (strain DSM 2245B / Goettingen), this protein is Arginine repressor.